Here is an 835-residue protein sequence, read N- to C-terminus: Translation initiation factor IF-2 (835 aa).

Residues 1–240 (MSDSDGKKTL…RKQERARQKA (240 aa)) form a disordered region. Positions 50–59 (AGKGGAGGVA) are enriched in gly residues. Residues 86–152 (KAREAEEAAQ…AEAAKKRAAA (67 aa)) are compositionally biased toward basic and acidic residues. Over residues 153–169 (DKAAAAAPKSDAGVAPA) the composition is skewed to low complexity. A compositionally biased stretch (basic and acidic residues) spans 184 to 205 (RKAEREREERGRGAKGRNDGGR). Residues 332-500 (PRPPVITIMG…AIALQAEILE (169 aa)) enclose the tr-type G domain. The G1 stretch occupies residues 341–348 (GHVDHGKT). 341 to 348 (GHVDHGKT) is a GTP binding site. Residues 366–370 (GITQH) form a G2 region. Residues 388–391 (DTPG) form a G3 region. Residues 388-392 (DTPGH) and 442-445 (NKID) contribute to the GTP site. Residues 442-445 (NKID) are G4. Residues 478-480 (SAH) are G5.

The protein belongs to the TRAFAC class translation factor GTPase superfamily. Classic translation factor GTPase family. IF-2 subfamily.

It is found in the cytoplasm. In terms of biological role, one of the essential components for the initiation of protein synthesis. Protects formylmethionyl-tRNA from spontaneous hydrolysis and promotes its binding to the 30S ribosomal subunits. Also involved in the hydrolysis of GTP during the formation of the 70S ribosomal complex. The polypeptide is Translation initiation factor IF-2 (Ruegeria sp. (strain TM1040) (Silicibacter sp.)).